Consider the following 440-residue polypeptide: Tryptophan aminotransferase-related protein 2 (440 aa).

A helical membrane pass occupies residues 7–26 (FLSWRNMLVLSLAINFSLIL). Pyridoxal 5'-phosphate is bound by residues Tyr-112, 154–155 (ST), Asn-222, 242–245 (DLAY), 265–268 (TASK), and Arg-276. N6-(pyridoxal phosphate)lysine is present on Lys-268.

This sequence belongs to the alliinase family. Requires pyridoxal 5'-phosphate as cofactor. As to expression, expressed in roots, cotyledons and in the apical parts of hypocotyls. In roots, restricted to the provasculature of meristematic regions. Detected on the inner side of the apical hooks.

It is found in the membrane. It carries out the reaction L-tryptophan + 2-oxoglutarate = indole-3-pyruvate + L-glutamate. The catalysed reaction is L-tryptophan + pyruvate = indole-3-pyruvate + L-alanine. It participates in plant hormone metabolism; auxin biosynthesis. With respect to regulation, inhibited by L-kynurenine. Functionally, involved in auxin production. Both TAA1 and TAR2 are required for maintaining proper auxin levels in roots, while TAA1, TAR1 and TAR2 are required for proper embryo patterning. Involved in the maintenance of the root stem cell niches. The chain is Tryptophan aminotransferase-related protein 2 (TAR2) from Arabidopsis thaliana (Mouse-ear cress).